The chain runs to 129 residues: Small ribosomal subunit protein uS11 (129 aa).

This sequence belongs to the universal ribosomal protein uS11 family. As to quaternary structure, part of the 30S ribosomal subunit. Interacts with proteins S7 and S18. Binds to IF-3.

In terms of biological role, located on the platform of the 30S subunit, it bridges several disparate RNA helices of the 16S rRNA. Forms part of the Shine-Dalgarno cleft in the 70S ribosome. In Nitrosospira multiformis (strain ATCC 25196 / NCIMB 11849 / C 71), this protein is Small ribosomal subunit protein uS11.